We begin with the raw amino-acid sequence, 29 residues long: Cytolysin Uc-1 (29 aa).

Residues 1-15 (DEQTGSKGPNENLPS) show a composition bias toward polar residues. The disordered stretch occupies residues 1 to 29 (DEQTGSKGPNENLPSQKDLXAKASXLTEV).

It localises to the secreted. It is found in the nematocyst. The protein resides in the target cell membrane. Pore-forming toxin that lyses bovine erythrocytes at nanomolar concentrations. Is devoid of enzymatic activity. Binds to monolayers and efficiently permeabilizes small lipid vesicles composed of sphingomyelin and cholesterol. The cytolytic activity is not prevented by cholesterol or sphingomyelin. In Urticina crassicornis (Mottled anemone), this protein is Cytolysin Uc-1.